Reading from the N-terminus, the 101-residue chain is Integration host factor subunit beta (101 aa).

Residues 57–77 are disordered; that stretch reads PARAGRNPRTGAHVPVDQKSV.

Belongs to the bacterial histone-like protein family. As to quaternary structure, heterodimer of an alpha and a beta chain.

Functionally, this protein is one of the two subunits of integration host factor, a specific DNA-binding protein that functions in genetic recombination as well as in transcriptional and translational control. The sequence is that of Integration host factor subunit beta from Rhodopseudomonas palustris (strain HaA2).